The chain runs to 289 residues: uncharacterized protein (289 aa).

10 helical membrane passes run 7–27, 33–53, 65–85, 92–112, 123–143, 148–168, 182–202, 212–232, 241–261, and 265–285; these read LLLA…KIGL, FNLA…WVFW, WLHL…FQFL, ATNA…WGLV, GVFL…LEFF, IFGD…TVLG, AYAF…SGFA, VAAL…VWYY, SVAV…FYAL, and PDFF…LTTA. 2 EamA domains span residues 14-136 and 159-285; these read LIWA…LIVS and FLWA…LTTA.

This sequence belongs to the EamA transporter family.

It is found in the cell membrane. This is an uncharacterized protein from Archaeoglobus fulgidus (strain ATCC 49558 / DSM 4304 / JCM 9628 / NBRC 100126 / VC-16).